A 178-amino-acid chain; its full sequence is Small ribosomal subunit protein uS5 (178 aa).

In terms of domain architecture, S5 DRBM spans 15–78 (FEEKIIEIRR…SAAKRNIIEV (64 aa)).

The protein belongs to the universal ribosomal protein uS5 family. Part of the 30S ribosomal subunit. Contacts proteins S4 and S8.

With S4 and S12 plays an important role in translational accuracy. Functionally, located at the back of the 30S subunit body where it stabilizes the conformation of the head with respect to the body. The chain is Small ribosomal subunit protein uS5 from Thermotoga sp. (strain RQ2).